A 513-amino-acid chain; its full sequence is ATP synthase subunit alpha (513 aa).

Position 170–177 (glycine 170–threonine 177) interacts with ATP.

It belongs to the ATPase alpha/beta chains family. In terms of assembly, F-type ATPases have 2 components, CF(1) - the catalytic core - and CF(0) - the membrane proton channel. CF(1) has five subunits: alpha(3), beta(3), gamma(1), delta(1), epsilon(1). CF(0) has four main subunits: a(1), b(1), b'(1) and c(9-12).

Its subcellular location is the cell inner membrane. It catalyses the reaction ATP + H2O + 4 H(+)(in) = ADP + phosphate + 5 H(+)(out). Functionally, produces ATP from ADP in the presence of a proton gradient across the membrane. The alpha chain is a regulatory subunit. This is ATP synthase subunit alpha from Gloeobacter violaceus (strain ATCC 29082 / PCC 7421).